The primary structure comprises 358 residues: Phosphate acyltransferase (358 aa).

The segment at 336 to 358 (SAAGAAPASPETAPTPHPSTRAA) is disordered.

It belongs to the PlsX family. In terms of assembly, homodimer. Probably interacts with PlsY.

Its subcellular location is the cytoplasm. It carries out the reaction a fatty acyl-[ACP] + phosphate = an acyl phosphate + holo-[ACP]. It functions in the pathway lipid metabolism; phospholipid metabolism. Its function is as follows. Catalyzes the reversible formation of acyl-phosphate (acyl-PO(4)) from acyl-[acyl-carrier-protein] (acyl-ACP). This enzyme utilizes acyl-ACP as fatty acyl donor, but not acyl-CoA. This is Phosphate acyltransferase from Cupriavidus pinatubonensis (strain JMP 134 / LMG 1197) (Cupriavidus necator (strain JMP 134)).